Consider the following 229-residue polypeptide: uncharacterized protein (229 aa).

This is an uncharacterized protein from Treponema pallidum (strain Nichols).